The chain runs to 132 residues: Prefoldin subunit alpha (132 aa).

This sequence belongs to the prefoldin subunit alpha family. In terms of assembly, heterohexamer of two alpha and four beta subunits.

It localises to the cytoplasm. In terms of biological role, molecular chaperone capable of stabilizing a range of proteins. Seems to fulfill an ATP-independent, HSP70-like function in archaeal de novo protein folding. The protein is Prefoldin subunit alpha of Pyrobaculum islandicum (strain DSM 4184 / JCM 9189 / GEO3).